Here is an 84-residue protein sequence, read N- to C-terminus: Large ribosomal subunit protein bL27 (84 aa).

Residues 1–22 are disordered; that stretch reads MAKTKAGGSTKNGRDSAGRRLG.

The protein belongs to the bacterial ribosomal protein bL27 family.

This is Large ribosomal subunit protein bL27 from Mesomycoplasma hyopneumoniae (strain 232) (Mycoplasma hyopneumoniae).